The following is a 256-amino-acid chain: Pimeloyl-[acyl-carrier protein] methyl ester esterase (256 aa).

Residues 16–240 (LVILHGWGVN…PKASHAPFLS (225 aa)) form the AB hydrolase-1 domain. Residues tryptophan 22, 80 to 81 (SL), and 143 to 147 (FLAIQ) contribute to the substrate site. Serine 80 acts as the Nucleophile in catalysis. Active-site residues include aspartate 207 and histidine 235. Histidine 235 lines the substrate pocket.

This sequence belongs to the AB hydrolase superfamily. Carboxylesterase BioH family. In terms of assembly, monomer.

It localises to the cytoplasm. It catalyses the reaction 6-carboxyhexanoyl-[ACP] methyl ester + H2O = 6-carboxyhexanoyl-[ACP] + methanol + H(+). It functions in the pathway cofactor biosynthesis; biotin biosynthesis. The physiological role of BioH is to remove the methyl group introduced by BioC when the pimeloyl moiety is complete. It allows to synthesize pimeloyl-ACP via the fatty acid synthetic pathway through the hydrolysis of the ester bonds of pimeloyl-ACP esters. This chain is Pimeloyl-[acyl-carrier protein] methyl ester esterase, found in Shewanella woodyi (strain ATCC 51908 / MS32).